The chain runs to 92 residues: Alpha-elapitoxin-As2a (92 aa).

The signal sequence occupies residues Met1–Gly21. 5 disulfide bridges follow: Cys24/Cys41, Cys34/Cys62, Cys47/Cys51, Cys66/Cys77, and Cys78/Cys83.

The protein belongs to the three-finger toxin family. Long-chain subfamily. Type II alpha-neurotoxin sub-subfamily. Expressed by the venom gland.

It is found in the secreted. Functionally, binds with high affinity to muscular (alpha-1/CHRNA1) and neuronal (alpha-7/CHRNA7) nicotinic acetylcholine receptor (nAChR) and inhibits acetylcholine from binding to the receptor, thereby impairing neuromuscular and neuronal transmission. This is Alpha-elapitoxin-As2a from Austrelaps superbus (Lowland copperhead snake).